Consider the following 653-residue polypeptide: Asparagine--tRNA ligase, cytoplasmic (653 aa).

Belongs to the class-II aminoacyl-tRNA synthetase family.

The protein localises to the cytoplasm. It catalyses the reaction tRNA(Asn) + L-asparagine + ATP = L-asparaginyl-tRNA(Asn) + AMP + diphosphate + H(+). The protein is Asparagine--tRNA ligase, cytoplasmic (asnS1) of Dictyostelium discoideum (Social amoeba).